Reading from the N-terminus, the 149-residue chain is Putative pre-16S rRNA nuclease (149 aa).

This sequence belongs to the YqgF nuclease family.

Its subcellular location is the cytoplasm. In terms of biological role, could be a nuclease involved in processing of the 5'-end of pre-16S rRNA. The sequence is that of Putative pre-16S rRNA nuclease from Burkholderia orbicola (strain MC0-3).